The chain runs to 367 residues: Phospho-N-acetylmuramoyl-pentapeptide-transferase (367 aa).

Helical transmembrane passes span 34 to 54 (GAVV…IDHL), 78 to 98 (TPTM…VLWA), 101 to 121 (LNPY…VGFY), 135 to 155 (FGSK…CYAL), 175 to 195 (TVLH…VGAG), 206 to 226 (GLAI…AYLA), 246 to 266 (LAVL…FNAP), 270 to 290 (IFMG…IAVA), 295 to 315 (IVLA…IVQV), and 344 to 364 (QIVI…LSTL).

This sequence belongs to the glycosyltransferase 4 family. MraY subfamily. It depends on Mg(2+) as a cofactor.

It localises to the cell inner membrane. The enzyme catalyses UDP-N-acetyl-alpha-D-muramoyl-L-alanyl-gamma-D-glutamyl-meso-2,6-diaminopimeloyl-D-alanyl-D-alanine + di-trans,octa-cis-undecaprenyl phosphate = di-trans,octa-cis-undecaprenyl diphospho-N-acetyl-alpha-D-muramoyl-L-alanyl-D-glutamyl-meso-2,6-diaminopimeloyl-D-alanyl-D-alanine + UMP. It participates in cell wall biogenesis; peptidoglycan biosynthesis. Functionally, catalyzes the initial step of the lipid cycle reactions in the biosynthesis of the cell wall peptidoglycan: transfers peptidoglycan precursor phospho-MurNAc-pentapeptide from UDP-MurNAc-pentapeptide onto the lipid carrier undecaprenyl phosphate, yielding undecaprenyl-pyrophosphoryl-MurNAc-pentapeptide, known as lipid I. This Bradyrhizobium diazoefficiens (strain JCM 10833 / BCRC 13528 / IAM 13628 / NBRC 14792 / USDA 110) protein is Phospho-N-acetylmuramoyl-pentapeptide-transferase.